Consider the following 389-residue polypeptide: Probable serine/threonine-protein kinase PBL24 (389 aa).

The tract at residues 1-36 (MSCFLGPSTNNKSRENEGSSMAAPYEQQNLPRNDRR) is disordered. Cysteine 3 carries S-palmitoyl cysteine lipidation. The Protein kinase domain occupies 71-348 (FRQEFLIGEG…SDVVTALSFM (278 aa)). ATP contacts are provided by residues 77–85 (IGEGGFGRV) and lysine 100. The active-site Proton acceptor is aspartate 198. Serine 202 and serine 232 each carry phosphoserine. Threonine 238 is modified (phosphothreonine). Tyrosine 246 carries the phosphotyrosine modification.

Belongs to the protein kinase superfamily. Ser/Thr protein kinase family.

The protein localises to the cell membrane. It catalyses the reaction L-seryl-[protein] + ATP = O-phospho-L-seryl-[protein] + ADP + H(+). The catalysed reaction is L-threonyl-[protein] + ATP = O-phospho-L-threonyl-[protein] + ADP + H(+). May be involved in plant defense signaling. This is Probable serine/threonine-protein kinase PBL24 from Arabidopsis thaliana (Mouse-ear cress).